Reading from the N-terminus, the 339-residue chain is Glyceraldehyde-3-phosphate dehydrogenase (339 aa).

NAD(+) is bound by residues 12-13 (RI), D39, R84, and S127. Residues 157–159 (SCT), T188, R203, 216–217 (TG), and R239 contribute to the D-glyceraldehyde 3-phosphate site. C158 acts as the Nucleophile in catalysis. NAD(+) is bound at residue N320.

This sequence belongs to the glyceraldehyde-3-phosphate dehydrogenase family. Homotetramer.

The protein localises to the cytoplasm. It carries out the reaction D-glyceraldehyde 3-phosphate + phosphate + NAD(+) = (2R)-3-phospho-glyceroyl phosphate + NADH + H(+). Its pathway is carbohydrate degradation; glycolysis; pyruvate from D-glyceraldehyde 3-phosphate: step 1/5. Catalyzes the oxidative phosphorylation of glyceraldehyde 3-phosphate (G3P) to 1,3-bisphosphoglycerate (BPG) using the cofactor NAD. The first reaction step involves the formation of a hemiacetal intermediate between G3P and a cysteine residue, and this hemiacetal intermediate is then oxidized to a thioester, with concomitant reduction of NAD to NADH. The reduced NADH is then exchanged with the second NAD, and the thioester is attacked by a nucleophilic inorganic phosphate to produce BPG. The polypeptide is Glyceraldehyde-3-phosphate dehydrogenase (gap) (Mycobacterium bovis (strain ATCC BAA-935 / AF2122/97)).